A 305-amino-acid chain; its full sequence is Capsid protein (305 aa).

Positions 30–49 (SMQRKSNRQRPKSRKTSGRV) are disordered. Residues 34-46 (KSNRQRPKSRKTS) show a composition bias toward basic residues.

The protein belongs to the icosahedral plant coat protein family.

Its subcellular location is the virion. Capsid protein self-assembles to form an icosahedral capsid about 34 nm in diameter. The capsid encapsulates the genomic RNA (Potential). The chain is Capsid protein from Poinsettia latent virus (isolate Euphorbia pulcherrima/Germany/Siepen/2005) (PnLV).